The following is a 247-amino-acid chain: Carboxy-S-adenosyl-L-methionine synthase (247 aa).

Residues tyrosine 39, 64–66, 89–90, 117–118, asparagine 132, and arginine 199 each bind S-adenosyl-L-methionine; these read GCS, DN, and DI.

This sequence belongs to the class I-like SAM-binding methyltransferase superfamily. Cx-SAM synthase family. In terms of assembly, homodimer.

The catalysed reaction is prephenate + S-adenosyl-L-methionine = carboxy-S-adenosyl-L-methionine + 3-phenylpyruvate + H2O. Catalyzes the conversion of S-adenosyl-L-methionine (SAM) to carboxy-S-adenosyl-L-methionine (Cx-SAM). This is Carboxy-S-adenosyl-L-methionine synthase from Citrobacter koseri (strain ATCC BAA-895 / CDC 4225-83 / SGSC4696).